We begin with the raw amino-acid sequence, 1770 residues long: AF4/FMR2 family member lilli (1770 aa).

3 stretches are compositionally biased toward low complexity: residues Met-1–Gln-19, Leu-154–Gln-204, and Pro-227–Pro-269. Disordered stretches follow at residues Met-1–Gln-28, Ser-134–Ile-327, Thr-402–Val-660, Leu-761–Pro-805, Met-822–Gln-1173, and Lys-1291–Lys-1390. Over residues Thr-402–Gly-414 the composition is skewed to polar residues. Over residues Lys-434–Pro-447 the composition is skewed to low complexity. Basic and acidic residues predominate over residues Leu-448–Ser-461. The span at Leu-463 to Asp-474 shows a compositional bias: acidic residues. A phosphoserine mark is found at Ser-470 and Ser-472. The span at Ser-483–Ser-503 shows a compositional bias: low complexity. Residues Gln-511–Gln-520 show a composition bias toward basic residues. Positions Gln-521–Leu-552 are enriched in low complexity. Residues Phe-582–Ser-614 are compositionally biased toward gly residues. Over residues Gly-615–Ser-625 the composition is skewed to low complexity. Composition is skewed to polar residues over residues Asn-626–Thr-638 and Ala-647–Asn-659. Over residues Ser-768–Glu-800 the composition is skewed to low complexity. Positions Gln-844 to Pro-854 are enriched in basic residues. Phosphoserine is present on residues Ser-863 and Ser-864. Composition is skewed to low complexity over residues Ala-880–Thr-893, Gln-909–Gln-928, Ala-994–Ser-1028, Ser-1071–Ser-1081, and Ser-1111–Ser-1131. Positions Lys-900–Ser-912 form a DNA-binding region, a.T hook. Ser-920 and Ser-922 each carry phosphoserine. Basic and acidic residues-rich tracts occupy residues Pro-1295–Phe-1312 and Phe-1321–Gln-1355. Residue Ser-1442 is modified to Phosphoserine. 2 stretches are compositionally biased toward low complexity: residues Ala-1483 to Ala-1499 and Gly-1656 to Asn-1676. 2 disordered regions span residues Ala-1483–Ala-1502 and Gly-1656–Val-1683.

It belongs to the AF4 family.

It localises to the nucleus. Has a role in transcriptional regulation. Acts in parallel with the Ras/MAPK and the PI3K/PKB pathways in the control of cell identity and cellular growth. Essential for regulation of the cytoskeleton and cell growth but not for cell proliferation or growth rate. Required specifically for the microtubule-based basal transport of lipid droplets. Plays a partially redundant function downstream of Raf in cell fate specification in the developing eye. Pair-rule protein that regulates embryonic cellularization, gastrulation and segmentation. This Drosophila pseudoobscura pseudoobscura (Fruit fly) protein is AF4/FMR2 family member lilli.